The following is a 347-amino-acid chain: Anthranilate phosphoribosyltransferase (347 aa).

Residues Gly88, 91 to 92 (GD), Thr96, 98 to 101 (NIST), 116 to 124 (KHGGRSVSS), and Ser128 each bind 5-phospho-alpha-D-ribose 1-diphosphate. Residue Gly88 coordinates anthranilate. Ser100 contacts Mg(2+). Position 174 (Arg174) interacts with anthranilate. The Mg(2+) site is built by Asp233 and Glu234.

It belongs to the anthranilate phosphoribosyltransferase family. As to quaternary structure, homodimer. Requires Mg(2+) as cofactor.

The enzyme catalyses N-(5-phospho-beta-D-ribosyl)anthranilate + diphosphate = 5-phospho-alpha-D-ribose 1-diphosphate + anthranilate. The protein operates within amino-acid biosynthesis; L-tryptophan biosynthesis; L-tryptophan from chorismate: step 2/5. Catalyzes the transfer of the phosphoribosyl group of 5-phosphorylribose-1-pyrophosphate (PRPP) to anthranilate to yield N-(5'-phosphoribosyl)-anthranilate (PRA). The chain is Anthranilate phosphoribosyltransferase from Polaromonas sp. (strain JS666 / ATCC BAA-500).